A 316-amino-acid chain; its full sequence is Bifunctional peptidase and (3S)-lysyl hydroxylase JMJD7 (316 aa).

Cysteine 19 carries the cysteine sulfenic acid (-SOH) modification. Positions 123 and 172 each coordinate 2-oxoglutarate. A succinate-binding site is contributed by tyrosine 123. The region spanning 124 to 310 (IQKQNSNLSV…YCYYRMLEQM (187 aa)) is the JmjC domain. Positions 175 and 177 each coordinate Fe cation. 2-oxoglutarate is bound by residues asparagine 181, tyrosine 183, and lysine 190. The succinate site is built by tyrosine 183 and lysine 190. A Fe cation-binding site is contributed by histidine 278. Tryptophan 292 contacts 2-oxoglutarate.

As to quaternary structure, homodimer; disulfide-linked. Requires Fe(2+) as cofactor. In terms of tissue distribution, expressed in the pars intercerebralis and fan-shaped body, regions known to be involved in sleep.

The protein resides in the nucleus. Its subcellular location is the cytoplasm. The enzyme catalyses L-lysyl-[protein] + 2-oxoglutarate + O2 = (3S)-3-hydroxy-L-lysyl-[protein] + succinate + CO2. Its function is as follows. Bifunctional enzyme that acts both as an endopeptidase and 2-oxoglutarate-dependent monooxygenase. Endopeptidase that cleaves histones N-terminal tails at the carboxyl side of methylated arginine or lysine residues, to generate 'tailless nucleosomes', which may trigger transcription elongation. Hydroxylates the guanylate binding protein 128up. May be involved in regulation of behavior and circadian rhythms. This chain is Bifunctional peptidase and (3S)-lysyl hydroxylase JMJD7, found in Drosophila melanogaster (Fruit fly).